The primary structure comprises 181 residues: Adenine phosphoribosyltransferase (181 aa).

This sequence belongs to the purine/pyrimidine phosphoribosyltransferase family. In terms of assembly, homodimer.

Its subcellular location is the cytoplasm. It carries out the reaction AMP + diphosphate = 5-phospho-alpha-D-ribose 1-diphosphate + adenine. The protein operates within purine metabolism; AMP biosynthesis via salvage pathway; AMP from adenine: step 1/1. Functionally, catalyzes a salvage reaction resulting in the formation of AMP, that is energically less costly than de novo synthesis. This chain is Adenine phosphoribosyltransferase, found in Cytophaga hutchinsonii (strain ATCC 33406 / DSM 1761 / CIP 103989 / NBRC 15051 / NCIMB 9469 / D465).